A 384-amino-acid polypeptide reads, in one-letter code: Spermatogenesis-associated protein 32 (384 aa).

The disordered stretch occupies residues 23–60; the sequence is RDDLSQHQIQEEQELEADMLEQKPQLQVDLDLDPDPDP. A phosphoserine mark is found at Ser167 and Ser170. 3 disordered regions span residues 211-232, 284-310, and 340-366; these read DAHS…SSDL, VEER…LKSW, and LLQP…EKEN. Low complexity predominate over residues 214-231; that stretch reads SAPPTTSSQAPSPLLSSD. The segment covering 353 to 366 has biased composition (basic and acidic residues); that stretch reads SKEDSVPPGKEKEN.

In terms of assembly, interacts with syntaxin-1 and ACTB. In terms of tissue distribution, detected in testis, and on the acrosomal cap of spermatids.

The chain is Spermatogenesis-associated protein 32 (SPATA32) from Homo sapiens (Human).